Consider the following 410-residue polypeptide: Translation initiation factor 2 subunit gamma (410 aa).

The 198-residue stretch at 6–203 (QSEVNIGMVG…AIQEFIPTPK (198 aa)) folds into the tr-type G domain. The segment at 15–22 (GHVDHGKT) is G1. Residues aspartate 18, threonine 22, glycine 43, and serine 45 each coordinate Mg(2+). 18-23 (DHGKTS) is a binding site for GTP. The G2 stretch occupies residues 43 to 47 (GISIR). Residues cysteine 58, cysteine 61, cysteine 73, and cysteine 76 each contribute to the Zn(2+) site. The G3 stretch occupies residues 90–93 (DAPG). Residues 146–149 (NKID) and 181–183 (SAH) contribute to the GTP site. The interval 146 to 149 (NKID) is G4. The interval 181 to 183 (SAH) is G5.

It belongs to the TRAFAC class translation factor GTPase superfamily. Classic translation factor GTPase family. EIF2G subfamily. Heterotrimer composed of an alpha, a beta and a gamma chain. Mg(2+) serves as cofactor.

The catalysed reaction is GTP + H2O = GDP + phosphate + H(+). Functionally, eIF-2 functions in the early steps of protein synthesis by forming a ternary complex with GTP and initiator tRNA. The polypeptide is Translation initiation factor 2 subunit gamma (Methanococcus maripaludis (strain C6 / ATCC BAA-1332)).